We begin with the raw amino-acid sequence, 167 residues long: L-alanine exporter AlaE (167 aa).

A run of 4 helical transmembrane segments spans residues 25 to 45 (GTEF…TGII), 50 to 70 (IAGM…ALMI), 105 to 125 (FQVP…GGLV), and 129 to 149 (LGAA…LNWV).

The protein belongs to the AlaE exporter family.

It is found in the cell inner membrane. Its function is as follows. Exports L-alanine. The polypeptide is L-alanine exporter AlaE (Pantoea sp. (strain At-9b)).